The following is a 244-amino-acid chain: Glutathione S-transferase theta-2B (244 aa).

In terms of domain architecture, GST N-terminal spans 2–82 (GLELFLDLVS…YLSCKYQTPD (81 aa)). Residues 40 to 41 (HK), 53 to 54 (KL), 66 to 67 (ES), and 104 to 107 (DCIR) each bind glutathione. Positions 88–224 (DLQARARVHE…SILEQAAKKT (137 aa)) constitute a GST C-terminal domain.

It belongs to the GST superfamily. Theta family. Homodimer. In terms of tissue distribution, expressed at low levels in liver. In lung, expressed at low levels in ciliated bronchiolar cells, alveolar macrophages and alveolar type II cells.

It localises to the cytoplasm. The protein resides in the cytosol. The enzyme catalyses RX + glutathione = an S-substituted glutathione + a halide anion + H(+). Its function is as follows. Conjugation of reduced glutathione to a wide number of exogenous and endogenous hydrophobic electrophiles. Has a sulfatase activity. This Homo sapiens (Human) protein is Glutathione S-transferase theta-2B (GSTT2B).